The sequence spans 270 residues: Phosphatidylglycerol--prolipoprotein diacylglyceryl transferase (270 aa).

Transmembrane regions (helical) follow at residues 19–39 (FPVY…LWLA), 56–76 (LVLI…VIFE), 92–112 (QGGL…ILFA), and 116–136 (GVSF…GQAI). Arg-138 contributes to the a 1,2-diacyl-sn-glycero-3-phospho-(1'-sn-glycerol) binding site. Transmembrane regions (helical) follow at residues 178–198 (HPTF…LLAL), 206–226 (GELF…VEGL), and 236–256 (LRIA…FIIV).

Belongs to the Lgt family.

Its subcellular location is the cell membrane. It catalyses the reaction L-cysteinyl-[prolipoprotein] + a 1,2-diacyl-sn-glycero-3-phospho-(1'-sn-glycerol) = an S-1,2-diacyl-sn-glyceryl-L-cysteinyl-[prolipoprotein] + sn-glycerol 1-phosphate + H(+). Its pathway is protein modification; lipoprotein biosynthesis (diacylglyceryl transfer). Catalyzes the transfer of the diacylglyceryl group from phosphatidylglycerol to the sulfhydryl group of the N-terminal cysteine of a prolipoprotein, the first step in the formation of mature lipoproteins. This is Phosphatidylglycerol--prolipoprotein diacylglyceryl transferase from Bacillus cereus (strain Q1).